Here is a 366-residue protein sequence, read N- to C-terminus: Histidinol-phosphate aminotransferase (366 aa).

K228 carries the post-translational modification N6-(pyridoxal phosphate)lysine.

This sequence belongs to the class-II pyridoxal-phosphate-dependent aminotransferase family. Histidinol-phosphate aminotransferase subfamily. As to quaternary structure, homodimer. Pyridoxal 5'-phosphate serves as cofactor.

It carries out the reaction L-histidinol phosphate + 2-oxoglutarate = 3-(imidazol-4-yl)-2-oxopropyl phosphate + L-glutamate. It functions in the pathway amino-acid biosynthesis; L-histidine biosynthesis; L-histidine from 5-phospho-alpha-D-ribose 1-diphosphate: step 7/9. This chain is Histidinol-phosphate aminotransferase, found in Stutzerimonas stutzeri (Pseudomonas stutzeri).